The sequence spans 300 residues: Recombination-associated protein RdgC (300 aa).

This sequence belongs to the RdgC family.

It is found in the cytoplasm. Its subcellular location is the nucleoid. In terms of biological role, may be involved in recombination. This Janthinobacterium sp. (strain Marseille) (Minibacterium massiliensis) protein is Recombination-associated protein RdgC.